The sequence spans 186 residues: FMN-dependent NADH:quinone oxidoreductase 1 (186 aa).

Residues 15–17 and 81–84 contribute to the FMN site; these read SVS and MYNF.

This sequence belongs to the azoreductase type 1 family. As to quaternary structure, homodimer. It depends on FMN as a cofactor.

The enzyme catalyses 2 a quinone + NADH + H(+) = 2 a 1,4-benzosemiquinone + NAD(+). It catalyses the reaction N,N-dimethyl-1,4-phenylenediamine + anthranilate + 2 NAD(+) = 2-(4-dimethylaminophenyl)diazenylbenzoate + 2 NADH + 2 H(+). Functionally, quinone reductase that provides resistance to thiol-specific stress caused by electrophilic quinones. Its function is as follows. Also exhibits azoreductase activity. Catalyzes the reductive cleavage of the azo bond in aromatic azo compounds to the corresponding amines. The chain is FMN-dependent NADH:quinone oxidoreductase 1 from Idiomarina loihiensis (strain ATCC BAA-735 / DSM 15497 / L2-TR).